The following is a 493-amino-acid chain: Protein kinase PINOID 2 (493 aa).

A disordered region spans residues 1–53 (MAAIKEESDYDSSRSSLTAPDSRRSWISDIGSSSSVSARSFGGDTPASSCRYK). Positions 27–44 (ISDIGSSSSVSARSFGGD) are enriched in low complexity. A Protein kinase domain is found at 80-443 (FRLVRRLGSG…SAEVKRHPFF (364 aa)). ATP is bound by residues 86–94 (LGSGDLGNV) and Lys120. Catalysis depends on Asp216, which acts as the Proton acceptor. Residues 295–306 (GGGAAAGNNGDG) show a composition bias toward gly residues. 2 disordered regions span residues 295 to 320 (GGGA…TAEP) and 458 to 493 (EVPA…FDYF). The span at 307–319 (DGNDEEAETETAE) shows a compositional bias: acidic residues. In terms of domain architecture, AGC-kinase C-terminal spans 444 to 493 (KGVNWALVRSVRPPEVPAPPAPAPKKVMTMSKKERQEPYNYRPENHFDYF). Over residues 474-493 (SKKERQEPYNYRPENHFDYF) the composition is skewed to basic and acidic residues.

It belongs to the protein kinase superfamily. Ser/Thr protein kinase family.

The catalysed reaction is L-seryl-[protein] + ATP = O-phospho-L-seryl-[protein] + ADP + H(+). It carries out the reaction L-threonyl-[protein] + ATP = O-phospho-L-threonyl-[protein] + ADP + H(+). Its function is as follows. Serine/threonine-protein kinase involved in the regulation of auxin signaling. The protein is Protein kinase PINOID 2 (PID2) of Oryza sativa subsp. japonica (Rice).